The chain runs to 190 residues: UPF0301 protein PSPPH_0476 (190 aa).

It belongs to the UPF0301 (AlgH) family.

The sequence is that of UPF0301 protein PSPPH_0476 from Pseudomonas savastanoi pv. phaseolicola (strain 1448A / Race 6) (Pseudomonas syringae pv. phaseolicola (strain 1448A / Race 6)).